Reading from the N-terminus, the 325-residue chain is Probable NADH kinase (325 aa).

This sequence belongs to the NAD kinase family. As to quaternary structure, homodimer.

Its subcellular location is the cytoplasm. The enzyme catalyses NADH + ATP = ADP + NADPH + H(+). Key source of the cellular reductant NADPH which is an important antioxidant factor. This Oryza sativa subsp. japonica (Rice) protein is Probable NADH kinase.